The chain runs to 601 residues: Putative helicase 7 (601 aa).

Residues 17–182 (QSFLMSDKNL…IIDAEIIKTD (166 aa)) form the Helicase ATP-binding domain. 30 to 37 (APTGTGKS) provides a ligand contact to ATP. The DEAH box motif lies at 129–132 (DEIH). One can recognise a Helicase C-terminal domain in the interval 208 to 375 (LKEDFIKKMV…VLEDFLLALI (168 aa)).

The chain is Putative helicase 7 (SIFV0007) from Saccharolobus islandicus (Sulfolobus islandicus).